Reading from the N-terminus, the 460-residue chain is Elongation factor 1-alpha (460 aa).

Glycine 2 carries the post-translational modification N,N,N-trimethylglycine. Lysine 3 bears the N6,N6-dimethyllysine; alternate mark. An N6-methyllysine; alternate modification is found at lysine 3. The region spanning 5 to 240 is the tr-type G domain; the sequence is KLHVNVVVIG…DAIEPPVRPS (236 aa). Residues 14–21 are G1; that stretch reads GHVDSGKS. 14 to 21 provides a ligand contact to GTP; that stretch reads GHVDSGKS. Position 30 is an N6-methyllysine (lysine 30). The interval 70–74 is G2; that stretch reads GITID. Lysine 79 is modified (N6,N6,N6-trimethyllysine). The G3 stretch occupies residues 91–94; it reads DAPG. Residues 91 to 95 and 153 to 156 contribute to the GTP site; these read DAPGH and NKMD. The segment at 153 to 156 is G4; sequence NKMD. A G5 region spans residues 192 to 194; sequence SGW. N6,N6-dimethyllysine; alternate is present on lysine 316. Position 316 is an N6-methyllysine; alternate (lysine 316). The residue at position 390 (lysine 390) is an N6-methyllysine.

This sequence belongs to the TRAFAC class translation factor GTPase superfamily. Classic translation factor GTPase family. EF-Tu/EF-1A subfamily.

It localises to the cytoplasm. This protein promotes the GTP-dependent binding of aminoacyl-tRNA to the A-site of ribosomes during protein biosynthesis. The polypeptide is Elongation factor 1-alpha (TEF1) (Schizophyllum commune (Split gill fungus)).